The primary structure comprises 163 residues: Crossover junction endodeoxyribonuclease RuvC (163 aa).

Residues D4, E65, and D138 contribute to the active site. Positions 4, 65, and 138 each coordinate Mg(2+).

The protein belongs to the RuvC family. As to quaternary structure, homodimer which binds Holliday junction (HJ) DNA. The HJ becomes 2-fold symmetrical on binding to RuvC with unstacked arms; it has a different conformation from HJ DNA in complex with RuvA. In the full resolvosome a probable DNA-RuvA(4)-RuvB(12)-RuvC(2) complex forms which resolves the HJ. Mg(2+) serves as cofactor.

It localises to the cytoplasm. It catalyses the reaction Endonucleolytic cleavage at a junction such as a reciprocal single-stranded crossover between two homologous DNA duplexes (Holliday junction).. Its function is as follows. The RuvA-RuvB-RuvC complex processes Holliday junction (HJ) DNA during genetic recombination and DNA repair. Endonuclease that resolves HJ intermediates. Cleaves cruciform DNA by making single-stranded nicks across the HJ at symmetrical positions within the homologous arms, yielding a 5'-phosphate and a 3'-hydroxyl group; requires a central core of homology in the junction. The consensus cleavage sequence is 5'-(A/T)TT(C/G)-3'. Cleavage occurs on the 3'-side of the TT dinucleotide at the point of strand exchange. HJ branch migration catalyzed by RuvA-RuvB allows RuvC to scan DNA until it finds its consensus sequence, where it cleaves and resolves the cruciform DNA. In Corynebacterium diphtheriae (strain ATCC 700971 / NCTC 13129 / Biotype gravis), this protein is Crossover junction endodeoxyribonuclease RuvC.